We begin with the raw amino-acid sequence, 476 residues long: Bifunctional protein HldE (476 aa).

The segment at Met1–Ser319 is ribokinase. Asn195 to Glu198 provides a ligand contact to ATP. Residue Asp264 is part of the active site. Residues Met345 to Gln476 form a cytidylyltransferase region.

It in the N-terminal section; belongs to the carbohydrate kinase PfkB family. This sequence in the C-terminal section; belongs to the cytidylyltransferase family. Homodimer.

The catalysed reaction is D-glycero-beta-D-manno-heptose 7-phosphate + ATP = D-glycero-beta-D-manno-heptose 1,7-bisphosphate + ADP + H(+). The enzyme catalyses D-glycero-beta-D-manno-heptose 1-phosphate + ATP + H(+) = ADP-D-glycero-beta-D-manno-heptose + diphosphate. Its pathway is nucleotide-sugar biosynthesis; ADP-L-glycero-beta-D-manno-heptose biosynthesis; ADP-L-glycero-beta-D-manno-heptose from D-glycero-beta-D-manno-heptose 7-phosphate: step 1/4. It functions in the pathway nucleotide-sugar biosynthesis; ADP-L-glycero-beta-D-manno-heptose biosynthesis; ADP-L-glycero-beta-D-manno-heptose from D-glycero-beta-D-manno-heptose 7-phosphate: step 3/4. Its function is as follows. Catalyzes the phosphorylation of D-glycero-D-manno-heptose 7-phosphate at the C-1 position to selectively form D-glycero-beta-D-manno-heptose-1,7-bisphosphate. Functionally, catalyzes the ADP transfer from ATP to D-glycero-beta-D-manno-heptose 1-phosphate, yielding ADP-D-glycero-beta-D-manno-heptose. This chain is Bifunctional protein HldE, found in Shewanella sp. (strain ANA-3).